The primary structure comprises 199 residues: Chaperone protein TorD (199 aa).

Belongs to the TorD/DmsD family. TorD subfamily.

The protein localises to the cytoplasm. In terms of biological role, involved in the biogenesis of TorA. Acts on TorA before the insertion of the molybdenum cofactor and, as a result, probably favors a conformation of the apoenzyme that is competent for acquiring the cofactor. This is Chaperone protein TorD from Shigella boydii serotype 18 (strain CDC 3083-94 / BS512).